A 182-amino-acid chain; its full sequence is FMN reductase (NADH) RutF (182 aa).

It belongs to the non-flavoprotein flavin reductase family. RutF subfamily.

The catalysed reaction is FMNH2 + NAD(+) = FMN + NADH + 2 H(+). Its function is as follows. Catalyzes the reduction of FMN to FMNH2 which is used to reduce pyrimidine by RutA via the Rut pathway. In Yersinia enterocolitica serotype O:8 / biotype 1B (strain NCTC 13174 / 8081), this protein is FMN reductase (NADH) RutF.